An 874-amino-acid chain; its full sequence is Probable inorganic carbon transporter subunit DabA (874 aa).

Zn(2+) is bound by residues C398, D400, H580, and C595.

The protein belongs to the inorganic carbon transporter (TC 9.A.2) DabA family. As to quaternary structure, forms a complex with DabB. Zn(2+) serves as cofactor.

It is found in the cell membrane. In terms of biological role, part of an energy-coupled inorganic carbon pump. This is Probable inorganic carbon transporter subunit DabA from Bacillus cereus (strain AH820).